The sequence spans 1160 residues: Carbamoyl phosphate synthase arginine-specific large chain, mitochondrial (1160 aa).

Residues 81–478 (AEHEKVKKVV…SLQKALRQVD (398 aa)) are carboxyphosphate synthetic domain. 12 residues coordinate ATP: R208, R248, G254, G255, K285, L287, E292, G318, I319, H320, Q361, and E375. An ATP-grasp 1 domain is found at 212-404 (AKALNEINIP…LAYTAAKIAL (193 aa)). Residues Q361, E375, and N377 each coordinate Mg(2+). Mn(2+) contacts are provided by Q361, E375, and N377. The tract at residues 479 to 623 (PSFLGFMAMP…YTSYNASSHD (145 aa)) is oligomerization domain. A carbamoyl phosphate synthetic domain region spans residues 624 to 1012 (IDFNEHGTMV…AYWAALQSTQ (389 aa)). Positions 748–946 (SQILDKIGVD…FIDVATRSII (199 aa)) constitute an ATP-grasp 2 domain. The ATP site is built by R784, K823, I825, E830, G855, V856, H857, S858, Q898, and E917. Q898, E917, and N919 together coordinate Mg(2+). Mn(2+) is bound by residues Q898, E917, and N919. Residues 1013-1144 (NFKIPLPGQG…PSVLSEKKEM (132 aa)) form an allosteric domain region. The region spanning 1014–1160 (FKIPLPGQGI…WSEWIGSHDL (147 aa)) is the MGS-like domain.

Belongs to the CarB family. As to quaternary structure, heterodimer composed of 2 chains; the small (or glutamine) chain promotes the hydrolysis of glutamine to ammonia, which is used by the large (or ammonia) chain to synthesize carbamoyl phosphate. Mg(2+) is required as a cofactor. The cofactor is Mn(2+).

It is found in the mitochondrion. The enzyme catalyses hydrogencarbonate + L-glutamine + 2 ATP + H2O = carbamoyl phosphate + L-glutamate + 2 ADP + phosphate + 2 H(+). It carries out the reaction hydrogencarbonate + NH4(+) + 2 ATP = carbamoyl phosphate + 2 ADP + phosphate + 2 H(+). It participates in amino-acid biosynthesis; L-arginine biosynthesis; carbamoyl phosphate from bicarbonate: step 1/1. In terms of biological role, large subunit of the arginine-specific carbamoyl phosphate synthase (CPSase). CPSase catalyzes the formation of carbamoyl phosphate from the ammonia moiety of glutamine, hydrogencarbonate, and phosphate donated by ATP, the first step of the arginine biosynthetic pathway. The large subunit (synthetase) binds the substrates ammonia (free or transferred from glutamine from the small subunit), hydrogencarbonate and ATP and carries out an ATP-coupled ligase reaction, activating hydrogencarbonate by forming carboxy phosphate which reacts with ammonia to form carbamoyl phosphate. The polypeptide is Carbamoyl phosphate synthase arginine-specific large chain, mitochondrial (arg4) (Schizosaccharomyces pombe (strain 972 / ATCC 24843) (Fission yeast)).